We begin with the raw amino-acid sequence, 293 residues long: 4-diphosphocytidyl-2-C-methyl-D-erythritol kinase (293 aa).

Lysine 16 is a catalytic residue. 99-109 provides a ligand contact to ATP; sequence PMGAGLGGGSS. Aspartate 141 is an active-site residue.

The protein belongs to the GHMP kinase family. IspE subfamily.

It carries out the reaction 4-CDP-2-C-methyl-D-erythritol + ATP = 4-CDP-2-C-methyl-D-erythritol 2-phosphate + ADP + H(+). It participates in isoprenoid biosynthesis; isopentenyl diphosphate biosynthesis via DXP pathway; isopentenyl diphosphate from 1-deoxy-D-xylulose 5-phosphate: step 3/6. Its function is as follows. Catalyzes the phosphorylation of the position 2 hydroxy group of 4-diphosphocytidyl-2C-methyl-D-erythritol. This Burkholderia ambifaria (strain MC40-6) protein is 4-diphosphocytidyl-2-C-methyl-D-erythritol kinase.